The following is a 448-amino-acid chain: MMAARLLGTSSRIFKLNKHLHTSKVAFMPVVQFKLSDIGEGIAEVQVKEWYVKEGDTISQFDKVCEVQSDKAAVTISCRYDGIVKKLYHEVDGMARVGQALIDVEIEGNVEEPEQPKKEAASSSPEAPKSSAPKAPESAHSEGKVLATPAVRRIAIENKIKLAEVRGTGKDGRVLKEDVLKFLGQVPADHTSGSTNIRTTHQAPQPSSKSYEPLKEDVAVPIRGYTRAMVKTMTEALKIPHFGYNDEINVDSLVKYRAELKEFAKERHIKLSYMPFFIKAASLALLEYPSLNSTTDEKMENVIHKASHNICLAMDTPGGLVVPNIKNCEQRSIFEIAQELNRLLEAGKKQQIKREDLIDGTFSLSNIGNIGGTYASPVVFPPQVAIGAIGKIEKLPRFDKHDNVIPVNIMKVSWCADHRVVDGATMARFSNRWKFYLEHPSAMLAQLK.

One can recognise a Lipoyl-binding domain in the interval valine 30–glutamate 105. At lysine 71 the chain carries N6-lipoyllysine. 2 disordered regions span residues glycine 108 to leucine 146 and threonine 191 to tyrosine 211. Residues alanine 121–proline 136 are compositionally biased toward low complexity. Residues leucine 146–leucine 183 form the Peripheral subunit-binding (PSBD) domain. Polar residues predominate over residues threonine 191–serine 210. Arginine 257, serine 272, aspartate 315, serine 365, asparagine 366, glycine 390, and isoleucine 392 together coordinate CoA. Catalysis depends on residues histidine 418 and aspartate 422.

It belongs to the 2-oxoacid dehydrogenase family. Requires (R)-lipoate as cofactor. In terms of tissue distribution, ubiquitously expressed.

It is found in the mitochondrion matrix. It localises to the cytoplasm. Its subcellular location is the cytosol. The protein resides in the cell projection. The protein localises to the dendrite. It is found in the cilium. It carries out the reaction N(6)-[(R)-dihydrolipoyl]-L-lysyl-[protein] + 2-methylpropanoyl-CoA = N(6)-[(R)-S(8)-2-methylpropanoyldihydrolipoyl]-L-lysyl-[protein] + CoA. In terms of biological role, the branched-chain alpha-keto dehydrogenase complex catalyzes the overall conversion of alpha-keto acids to acyl-CoA and CO(2). It contains multiple copies of three enzymatic components: branched-chain alpha-keto acid decarboxylase (E1), lipoamide acyltransferase (E2) and lipoamide dehydrogenase (E3). Within this complex, the catalytic function of this enzyme is to accept, and to transfer to coenzyme A, acyl groups that are generated by the branched-chain alpha-keto acid decarboxylase component. Required for the catabolism of branched-chain amino acids and the subsequent synthesis of monomethyl branched-chain fatty acids, which are important for regulating postembryonic growth. The sequence is that of Lipoamide acyltransferase component of branched-chain alpha-keto acid dehydrogenase complex, mitochondrial from Caenorhabditis elegans.